The following is a 756-amino-acid chain: Neutral ceramidase (756 aa).

Over 1-11 (MAKRTFSTLEA) the chain is Cytoplasmic. A helical; Signal-anchor for type II membrane protein membrane pass occupies residues 12 to 32 (FLIFLLVIMTVITVALLTLLF). The Lumenal segment spans residues 33 to 756 (VTSGTIENHK…ISSPFEVVTT (724 aa)). T56, T57, T58, and T64 each carry an O-linked (GalNAc...) threonine glycan. L110 is a binding site for Ca(2+). Position 170 (H170) interacts with Zn(2+). Residue N193 is glycosylated (N-linked (GlcNAc...) asparagine). H279 contributes to the Zn(2+) binding site. S330 serves as the catalytic Nucleophile. Cystine bridges form between C338–C352 and C345–C360. N-linked (GlcNAc...) asparagine glycans are attached at residues N407 and N444. C424 and C474 are disulfide-bonded. 2 residues coordinate Zn(2+): E516 and Y555. Ca(2+)-binding residues include D688, S690, and T693. A required for correct folding and localization region spans residues 746–756 (GISSPFEVVTT).

It belongs to the neutral ceramidase family. May interact with CAV1. Zn(2+) is required as a cofactor. In terms of processing, proteolytic cleavage of the N-terminus removes the signal-anchor and produces a soluble form of the protein. Post-translationally, N-glycosylated. Required for enzyme activity. O-glycosylated. Required to retain it as a type II membrane protein at the cell surface. In terms of processing, phosphorylated. May prevent ubiquitination and subsequent degradation. Post-translationally, ubiquitinated, leading to its degradation by the proteasome. Ubiquitination is triggered by nitric oxide. In terms of tissue distribution, widely expressed. Strongly expressed in small intestine and to a lower extent in liver and kidney. Highly expressed in duodenum, jejunum and ileum along the brush border of the small intestine (at protein level).

The protein localises to the cell membrane. Its subcellular location is the membrane raft. It localises to the membrane. The protein resides in the caveola. It is found in the golgi apparatus membrane. The protein localises to the mitochondrion. Its subcellular location is the secreted. It localises to the extracellular exosome. It carries out the reaction an N-acylsphing-4-enine + H2O = sphing-4-enine + a fatty acid. The catalysed reaction is N-hexadecanoylsphing-4-enine + H2O = sphing-4-enine + hexadecanoate. It catalyses the reaction N-dodecanoylsphing-4-enine + H2O = dodecanoate + sphing-4-enine. The enzyme catalyses N-octadecanoylsphing-4-enine + H2O = sphing-4-enine + octadecanoate. It carries out the reaction N-octanoylsphing-4-enine + H2O = octanoate + sphing-4-enine. The catalysed reaction is N-(hexanoyl)sphing-4-enine + H2O = hexanoate + sphing-4-enine. It catalyses the reaction N-tetradecanoylsphing-4-enine + H2O = tetradecanoate + sphing-4-enine. The enzyme catalyses N-(9Z-octadecenoyl)-sphing-4-enine + H2O = sphing-4-enine + (9Z)-octadecenoate. It carries out the reaction N-(15Z-tetracosenoyl)-sphing-4-enine + H2O = (15Z)-tetracosenoate + sphing-4-enine. The catalysed reaction is sphinganine + hexadecanoate = N-hexadecanoylsphinganine + H2O. It catalyses the reaction N-(octadecanoyl)-sphinganine + H2O = sphinganine + octadecanoate. It functions in the pathway lipid metabolism; sphingolipid metabolism. With respect to regulation, inhibited by D-erythro-MAPP. Plasma membrane ceramidase that hydrolyzes sphingolipid ceramides into sphingosine and free fatty acids at neutral pH. Ceramides, sphingosine, and its phosphorylated form sphingosine-1-phosphate are bioactive lipids that mediate cellular signaling pathways regulating several biological processes including cell proliferation, apoptosis and differentiation. Also catalyzes the reverse reaction allowing the synthesis of ceramides from fatty acids and sphingosine. Together with sphingomyelinase, participates in the production of sphingosine and sphingosine-1-phosphate from the degradation of sphingomyelin, a sphingolipid enriched in the plasma membrane of cells. Also participates in the hydrolysis of ceramides from the extracellular milieu allowing the production of sphingosine-1-phosphate inside and outside cells. This is the case for instance with the digestion of dietary sphingolipids in the intestinal tract. In Mus musculus (Mouse), this protein is Neutral ceramidase (Asah2).